The chain runs to 59 residues: Ribosome biogenesis protein Nop10 (59 aa).

This sequence belongs to the NOP10 family.

Involved in ribosome biogenesis; more specifically in 18S rRNA pseudouridylation and in cleavage of pre-rRNA. This chain is Ribosome biogenesis protein Nop10, found in Thermococcus gammatolerans (strain DSM 15229 / JCM 11827 / EJ3).